Here is a 305-residue protein sequence, read N- to C-terminus: Peroxisome assembly protein 26 (305 aa).

A disordered region spans residues 1-25 (MKSDCSTSAAPFRGLGGPLRSSEPV). The Cytoplasmic portion of the chain corresponds to 1 to 246 (MKSDCSTSAA…RQLWDSAVSH (246 aa)). Residues 247 to 267 (FFSLPFKKSLLAALILCLLVV) form a helical; Signal-anchor for type II membrane protein membrane-spanning segment. At 268 to 305 (RFDPASPSSLPSLYKLAQLFRWIRKAASSRLYQLRIRD) the chain is on the peroxisomal matrix side.

It belongs to the peroxin-26 family. Interacts (via its cytoplasmic domain) with PEX6; interaction is direct and is ATP-dependent. Interacts with PEX1; interaction is indirect and is mediated via interaction with PEX6.

It is found in the peroxisome membrane. Peroxisomal docking factor that anchors PEX1 and PEX6 to peroxisome membranes. PEX26 is therefore required for the formation of the PEX1-PEX6 AAA ATPase complex, a complex that mediates the extraction of the PEX5 receptor from peroxisomal membrane. The sequence is that of Peroxisome assembly protein 26 (PEX26) from Macaca fascicularis (Crab-eating macaque).